Here is a 339-residue protein sequence, read N- to C-terminus: Phosphate acyltransferase (339 aa).

This sequence belongs to the PlsX family. As to quaternary structure, homodimer. Probably interacts with PlsY.

It localises to the cytoplasm. It catalyses the reaction a fatty acyl-[ACP] + phosphate = an acyl phosphate + holo-[ACP]. It functions in the pathway lipid metabolism; phospholipid metabolism. Catalyzes the reversible formation of acyl-phosphate (acyl-PO(4)) from acyl-[acyl-carrier-protein] (acyl-ACP). This enzyme utilizes acyl-ACP as fatty acyl donor, but not acyl-CoA. The chain is Phosphate acyltransferase from Brachyspira hyodysenteriae (strain ATCC 49526 / WA1).